The chain runs to 212 residues: Thymidylate kinase (212 aa).

10–17 (GPEGAGKT) is a binding site for ATP.

Belongs to the thymidylate kinase family.

It catalyses the reaction dTMP + ATP = dTDP + ADP. Phosphorylation of dTMP to form dTDP in both de novo and salvage pathways of dTTP synthesis. The sequence is that of Thymidylate kinase from Bacillus pumilus (strain SAFR-032).